Reading from the N-terminus, the 441-residue chain is Methylenetetrahydrofolate--tRNA-(uracil-5-)-methyltransferase TrmFO (441 aa).

Position 7-12 (7-12) interacts with FAD; that stretch reads GAGLSG.

This sequence belongs to the MnmG family. TrmFO subfamily. FAD is required as a cofactor.

Its subcellular location is the cytoplasm. It catalyses the reaction uridine(54) in tRNA + (6R)-5,10-methylene-5,6,7,8-tetrahydrofolate + NADH + H(+) = 5-methyluridine(54) in tRNA + (6S)-5,6,7,8-tetrahydrofolate + NAD(+). The enzyme catalyses uridine(54) in tRNA + (6R)-5,10-methylene-5,6,7,8-tetrahydrofolate + NADPH + H(+) = 5-methyluridine(54) in tRNA + (6S)-5,6,7,8-tetrahydrofolate + NADP(+). Its function is as follows. Catalyzes the folate-dependent formation of 5-methyl-uridine at position 54 (M-5-U54) in all tRNAs. This is Methylenetetrahydrofolate--tRNA-(uracil-5-)-methyltransferase TrmFO from Pseudothermotoga lettingae (strain ATCC BAA-301 / DSM 14385 / NBRC 107922 / TMO) (Thermotoga lettingae).